Reading from the N-terminus, the 92-residue chain is UPF0298 protein BH2594 (92 aa).

The protein belongs to the UPF0298 family.

It is found in the cytoplasm. The polypeptide is UPF0298 protein BH2594 (Halalkalibacterium halodurans (strain ATCC BAA-125 / DSM 18197 / FERM 7344 / JCM 9153 / C-125) (Bacillus halodurans)).